Consider the following 79-residue polypeptide: Protein S100-G (79 aa).

Serine 2 bears the N-acetylserine mark. EF-hand domains are found at residues 13 to 48 (IFEK…KGPS) and 45 to 79 (KGPS…KISQ). Positions 26 and 31 each coordinate Ca(2+). Serine 42 bears the Phosphoserine mark. Ca(2+) contacts are provided by aspartate 58, asparagine 60, aspartate 62, glutamate 64, and glutamate 69.

The protein belongs to the S-100 family.

The chain is Protein S100-G (S100G) from Bos taurus (Bovine).